The following is a 313-amino-acid chain: Ribosomal RNA small subunit methyltransferase H (313 aa).

Residues glycine 36–histidine 38, aspartate 56, phenylalanine 80, aspartate 102, and glutamine 109 contribute to the S-adenosyl-L-methionine site.

The protein belongs to the methyltransferase superfamily. RsmH family.

The protein resides in the cytoplasm. The catalysed reaction is cytidine(1402) in 16S rRNA + S-adenosyl-L-methionine = N(4)-methylcytidine(1402) in 16S rRNA + S-adenosyl-L-homocysteine + H(+). In terms of biological role, specifically methylates the N4 position of cytidine in position 1402 (C1402) of 16S rRNA. This chain is Ribosomal RNA small subunit methyltransferase H, found in Haemophilus ducreyi (strain 35000HP / ATCC 700724).